The chain runs to 575 residues: Proline--tRNA ligase (575 aa).

It belongs to the class-II aminoacyl-tRNA synthetase family. ProS type 1 subfamily. In terms of assembly, homodimer.

Its subcellular location is the cytoplasm. It carries out the reaction tRNA(Pro) + L-proline + ATP = L-prolyl-tRNA(Pro) + AMP + diphosphate. In terms of biological role, catalyzes the attachment of proline to tRNA(Pro) in a two-step reaction: proline is first activated by ATP to form Pro-AMP and then transferred to the acceptor end of tRNA(Pro). As ProRS can inadvertently accommodate and process non-cognate amino acids such as alanine and cysteine, to avoid such errors it has two additional distinct editing activities against alanine. One activity is designated as 'pretransfer' editing and involves the tRNA(Pro)-independent hydrolysis of activated Ala-AMP. The other activity is designated 'posttransfer' editing and involves deacylation of mischarged Ala-tRNA(Pro). The misacylated Cys-tRNA(Pro) is not edited by ProRS. The polypeptide is Proline--tRNA ligase (Desulfitobacterium hafniense (strain DSM 10664 / DCB-2)).